The chain runs to 149 residues: Alpha-crystallin A chain (149 aa).

In terms of domain architecture, sHSP spans 41-149 (LFRSVLESGI…DASHGERPIP (109 aa)). Zn(2+) is bound by residues H89, E91, H96, and H143.

It belongs to the small heat shock protein (HSP20) family. In terms of assembly, heteropolymer composed of three CRYAA and one CRYAB subunits. Inter-subunit bridging via zinc ions enhances stability, which is crucial as there is no protein turn over in the lens. Can also form homodimers and homotetramers (dimers of dimers) which serve as the building blocks of homooligomers. Within homooligomers, the zinc-binding motif is created from residues of 3 different molecules. His-89 and Glu-91 from one molecule are ligands of the zinc ion, and His-96 and His-143 residues from additional molecules complete the site with tetrahedral coordination geometry. Part of a complex required for lens intermediate filament formation composed of BFSP1, BFSP2 and CRYAA.

It is found in the cytoplasm. Its subcellular location is the nucleus. Functionally, contributes to the transparency and refractive index of the lens. May act as a chaperone, preventing aggregation of various proteins under a wide range of stress conditions. The chain is Alpha-crystallin A chain (CRYAA) from Columba livia (Rock dove).